Here is a 171-residue protein sequence, read N- to C-terminus: 16S rRNA aminocarboxypropyltransferase (171 aa).

S-adenosyl-L-methionine-binding residues include threonine 17, leucine 67, leucine 90, and threonine 109.

This sequence belongs to the TDD superfamily. TSR3 family.

The protein localises to the cytoplasm. It catalyses the reaction an N(1)-methylpseudouridine in rRNA + S-adenosyl-L-methionine = N(1)-methyl-N(3)-[(3S)-3-amino-3-carboxypropyl]pseudouridine in rRNA + S-methyl-5'-thioadenosine + H(+). Aminocarboxypropyltransferase that catalyzes the aminocarboxypropyl transfer on pseudouridine corresponding to position 914 in M.jannaschii 16S rRNA. It constitutes the last step in biosynthesis of the hypermodified N1-methyl-N3-(3-amino-3-carboxypropyl) pseudouridine (m1acp3-Psi). The sequence is that of 16S rRNA aminocarboxypropyltransferase from Methanobrevibacter smithii (strain ATCC 35061 / DSM 861 / OCM 144 / PS).